The following is a 266-amino-acid chain: Proteasome subunit alpha type-1 (266 aa).

This sequence belongs to the peptidase T1A family. In terms of assembly, the 26S proteasome consists of a 20S proteasome core and two 19S regulatory subunits. The 20S proteasome core is composed of 28 subunits that are arranged in four stacked rings, resulting in a barrel-shaped structure. The two end rings are each formed by seven alpha subunits, and the two central rings are each formed by seven beta subunits. The catalytic chamber with the active sites is on the inside of the barrel.

The protein localises to the cytoplasm. The protein resides in the nucleus. Its function is as follows. The proteasome is a multicatalytic proteinase complex which is characterized by its ability to cleave peptides with Arg, Phe, Tyr, Leu, and Glu adjacent to the leaving group at neutral or slightly basic pH. The proteasome has an ATP-dependent proteolytic activity. The polypeptide is Proteasome subunit alpha type-1 (Trypanosoma brucei brucei).